Here is a 233-residue protein sequence, read N- to C-terminus: uncharacterized protein (233 aa).

Positions 64, 66, 68, 69, 143, 162, and 212 each coordinate Zn(2+).

It belongs to the metallo-beta-lactamase superfamily. Glyoxalase II family. The cofactor is Zn(2+).

This is an uncharacterized protein from Bacillus subtilis (strain 168).